Consider the following 461-residue polypeptide: Fumarate hydratase class II (461 aa).

Substrate contacts are provided by residues 97–99 (SGT), 127–130 (HPND), 137–139 (SSN), and T185. H186 functions as the Proton donor/acceptor in the catalytic mechanism. Residue S316 is part of the active site. Substrate-binding positions include S317 and 322–324 (KVN).

Belongs to the class-II fumarase/aspartase family. Fumarase subfamily. As to quaternary structure, homotetramer.

It is found in the cytoplasm. The catalysed reaction is (S)-malate = fumarate + H2O. The protein operates within carbohydrate metabolism; tricarboxylic acid cycle; (S)-malate from fumarate: step 1/1. Involved in the TCA cycle. Catalyzes the stereospecific interconversion of fumarate to L-malate. The protein is Fumarate hydratase class II of Staphylococcus haemolyticus (strain JCSC1435).